The primary structure comprises 133 residues: ATP synthase epsilon chain (133 aa).

Belongs to the ATPase epsilon chain family. In terms of assembly, F-type ATPases have 2 components, CF(1) - the catalytic core - and CF(0) - the membrane proton channel. CF(1) has five subunits: alpha(3), beta(3), gamma(1), delta(1), epsilon(1). CF(0) has three main subunits: a, b and c.

It localises to the cell membrane. Its function is as follows. Produces ATP from ADP in the presence of a proton gradient across the membrane. The sequence is that of ATP synthase epsilon chain (atpC) from Mycoplasma pneumoniae (strain ATCC 29342 / M129 / Subtype 1) (Mycoplasmoides pneumoniae).